A 416-amino-acid chain; its full sequence is Tyrosine--tRNA ligase (416 aa).

L-tyrosine is bound at residue Tyr-39. Residues 44–53 carry the 'HIGH' region motif; that stretch reads CTASSLHVGS. L-tyrosine-binding residues include Tyr-176 and Gln-180. The short motif at 236-240 is the 'KMSKS' region element; that stretch reads KMGKT. Lys-239 serves as a coordination point for ATP. The S4 RNA-binding domain occupies 349-415; it reads ISLIDLLHDI…GKKRHIKVMV (67 aa).

This sequence belongs to the class-I aminoacyl-tRNA synthetase family. TyrS type 1 subfamily. As to quaternary structure, homodimer.

Its subcellular location is the cytoplasm. The enzyme catalyses tRNA(Tyr) + L-tyrosine + ATP = L-tyrosyl-tRNA(Tyr) + AMP + diphosphate + H(+). Its function is as follows. Catalyzes the attachment of tyrosine to tRNA(Tyr) in a two-step reaction: tyrosine is first activated by ATP to form Tyr-AMP and then transferred to the acceptor end of tRNA(Tyr). In Wolbachia sp. subsp. Brugia malayi (strain TRS), this protein is Tyrosine--tRNA ligase.